Here is a 101-residue protein sequence, read N- to C-terminus: Small ribosomal subunit protein uS14 (101 aa).

Belongs to the universal ribosomal protein uS14 family. In terms of assembly, part of the 30S ribosomal subunit. Contacts proteins S3 and S10.

Functionally, binds 16S rRNA, required for the assembly of 30S particles and may also be responsible for determining the conformation of the 16S rRNA at the A site. The polypeptide is Small ribosomal subunit protein uS14 (Hyphomonas neptunium (strain ATCC 15444)).